A 281-amino-acid chain; its full sequence is Src-like-adapter (281 aa).

The interval Met-1–Glu-20 is disordered. A lipid anchor (N-myristoyl glycine) is attached at Gly-2. Residues Ser-7–Glu-20 are compositionally biased toward low complexity. The SH3 domain maps to Leu-22–His-82. Positions Trp-84–Cys-175 constitute an SH2 domain. Residues Cys-190–Asp-281 are SLA C-terminal. Ser-258 carries the phosphoserine modification. At Tyr-278 the chain carries Phosphotyrosine.

In terms of assembly, homodimer. Interacts with phosphorylated CBL, SYK and LAT. Homodimerization and interaction with phosphorylated CBL occurs via its C-terminal domain. Interacts with PDGFRB and EPHA2. Interacts with phosphorylated proteins ZAP70; CD3Z; VAV1 and LCP2 via its SH2 domain. In terms of tissue distribution, predominantly expressed in lymphoid tissues. Highly expressed in spleen, thymus and lymph nodes. Weakly expressed in lung and brain. Expressed in T-cells and at low level in B-cells.

It localises to the cytoplasm. Its subcellular location is the endosome. Its function is as follows. Adapter protein, which negatively regulates T-cell receptor (TCR) signaling. Inhibits T-cell antigen-receptor induced activation of nuclear factor of activated T-cells. Involved in the negative regulation of positive selection and mitosis of T-cells. May act by linking signaling proteins such as ZAP70 with CBL, leading to a CBL dependent degradation of signaling proteins. The sequence is that of Src-like-adapter (Sla) from Mus musculus (Mouse).